A 686-amino-acid chain; its full sequence is Probable ferric reductase transmembrane component (686 aa).

7 helical membrane passes run 23-43, 79-99, 111-131, 147-167, 178-198, 205-225, and 256-276; these read LSGW…VPVV, TLWL…VGSA, VAAA…PLPY, VVVL…ATSG, WMGA…LPAV, TFYY…HVHS, and VTVV…ADLV. Residues 108 to 666 form the Ferric oxidoreductase domain; that stretch reads LGRVAAAFMP…LAAGPQALVE (559 aa). 308–314 provides a ligand contact to FAD; sequence HPFTVAS. The chain crosses the membrane as a helical span at residues 392-412; sequence LMVVGGSAISFGLPFLRILNF. NAD(+) is bound at residue 431 to 439; the sequence is ILSQFRSNF. N-linked (GlcNAc...) asparagine glycans are attached at residues Asn506 and Asn644.

It depends on FAD as a cofactor.

It localises to the membrane. It catalyses the reaction 2 a Fe(II)-siderophore + NAD(+) + H(+) = 2 a Fe(III)-siderophore + NADH. In terms of biological role, is required for the uptake of Fe(3+) ions. May participate in the transport of electrons from cytoplasm to an extracellular substrate (Fe(3+) ion) via FAD and heme intermediates. Involved in iron homeostasis. This is Probable ferric reductase transmembrane component (FRE8) from Eremothecium gossypii (strain ATCC 10895 / CBS 109.51 / FGSC 9923 / NRRL Y-1056) (Yeast).